Consider the following 107-residue polypeptide: UPF0145 protein TT_C0892 (107 aa).

This sequence belongs to the UPF0145 family.

The chain is UPF0145 protein TT_C0892 from Thermus thermophilus (strain ATCC BAA-163 / DSM 7039 / HB27).